The primary structure comprises 65 residues: U15-hexatoxin-Mg1b (65 aa).

In terms of processing, contains 4 disulfide bonds. In terms of tissue distribution, expressed by the venom gland.

It is found in the secreted. In vivo, intrathorax injection into crickets causes death. In Macrothele gigas (Japanese funnel web spider), this protein is U15-hexatoxin-Mg1b.